A 434-amino-acid chain; its full sequence is MKRTMLYLSLLAVSCSVSAAKYPVLTESSPEKAGFNVERLNQMDRWISQQVDVGYPSVNLLIIKDNQIVYRKAWGAAKKYDGSVLMEQPVKATTGTLYDLASNTKMYATNFALQKLMSEGKLHPDDRIAKYIPGFADSPNDTIKGKNTLRISDLLHHSGGFPADPQYPNKAVAGALYSQDKGQTLEMIKRTPLEYQPGSKHIYSDVDYMLLGFIVESVTGQPLDRYVEESIYRPLGLTHTVFNPLLKGFKPQQIAATELNGNTRDGVIHFPNIRTSTLWGQVHDEKAFYSMGGVSGHAGLFSNTGDIAVLMQTMLNGGGYGDVQLFNAETVKMFTTSSKEDATFGLGWRVNGNATMTPTFGTLASPQTYGHTGWTGTVTVIDPVNHMTIVMLSNKPHSPVADPQKNPNMFESGQLPIATYGWVVDQVYAALKQK.

The helical; Signal-anchor transmembrane segment at Y7–L25 threads the bilayer.

The protein belongs to the peptidase S12 family. YfeW subfamily.

The protein resides in the cell inner membrane. It carries out the reaction Preferential cleavage: (Ac)2-L-Lys-D-Ala-|-D-Ala. Also transpeptidation of peptidyl-alanyl moieties that are N-acyl substituents of D-alanine.. In terms of biological role, penicillin-binding protein. Has low DD-carboxypeptidase activity. The polypeptide is Putative D-alanyl-D-alanine carboxypeptidase (Escherichia coli (strain K12)).